The chain runs to 337 residues: Pyruvate dehydrogenase E1 component subunit beta (337 aa).

E73 is a thiamine diphosphate binding site.

As to quaternary structure, heterodimer of an alpha and a beta chain. Thiamine diphosphate is required as a cofactor.

It carries out the reaction N(6)-[(R)-lipoyl]-L-lysyl-[protein] + pyruvate + H(+) = N(6)-[(R)-S(8)-acetyldihydrolipoyl]-L-lysyl-[protein] + CO2. The pyruvate dehydrogenase complex catalyzes the overall conversion of pyruvate to acetyl-CoA and CO(2). It contains multiple copies of three enzymatic components: pyruvate dehydrogenase (E1), dihydrolipoamide acetyltransferase (E2) and lipoamide dehydrogenase (E3). The polypeptide is Pyruvate dehydrogenase E1 component subunit beta (pdhB) (Leifsonia xyli subsp. xyli (strain CTCB07)).